Here is a 514-residue protein sequence, read N- to C-terminus: Major facilitator superfamily domain-containing protein 4A (514 aa).

The next 5 helical transmembrane spans lie at 19-39 (LTYW…GPTL), 53-73 (ISWV…LGGV), 82-102 (LWAL…IPFC), 107-127 (VLAS…TVAN), and 139-159 (AVFL…SPLI). Asn177 carries N-linked (GlcNAc...) asparagine glycosylation. 7 consecutive transmembrane segments (helical) span residues 221–241 (YAFW…LMLL), 307–327 (FFAI…LTGA), 347–367 (VAGY…LLSI), 376–396 (ATMV…LLIF), 400–420 (VVFL…TFPS), 438–458 (VLVT…GSIF), and 466–486 (FLVC…LLLF).

The protein belongs to the major facilitator superfamily.

The protein resides in the membrane. In Homo sapiens (Human), this protein is Major facilitator superfamily domain-containing protein 4A.